A 514-amino-acid polypeptide reads, in one-letter code: Beta-galactoside alpha-2,6-sialyltransferase 2 (514 aa).

The Cytoplasmic portion of the chain corresponds to 1 to 10 (MKSSLKQWRR). A helical; Signal-anchor for type II membrane protein transmembrane segment spans residues 11–31 (LALGLILVWALLFLALLSYFM). Over 32 to 514 (ESRVDDPHAA…PGFNKVHCEP (483 aa)) the chain is Lumenal. Residues 70 to 92 (ATSSAPSTSSNTQQEQSQEENPS) show a composition bias toward low complexity. Positions 70-183 (ATSSAPSTSS…TKRVARHGSS (114 aa)) are disordered. Residues 119–132 (FGTQDVGSRSTGVS) are compositionally biased toward polar residues. Over residues 145 to 166 (PQEDEDEEEEVIGGEEEDEEGG) the composition is skewed to acidic residues. Cystine bridges form between Cys-246-Cys-512, Cys-289-Cys-441, and Cys-459-Cys-470. Asn-330, Asn-350, and Asn-357 each carry an N-linked (GlcNAc...) asparagine glycan.

It belongs to the glycosyltransferase 29 family.

The protein localises to the golgi apparatus. It is found in the golgi stack membrane. The enzyme catalyses a beta-D-galactoside + CMP-N-acetyl-beta-neuraminate = an N-acetyl-alpha-neuraminyl-(2-&gt;6)-beta-D-galactosyl derivative + CMP + H(+). In terms of biological role, transfers sialic acid from the donor of substrate CMP-sialic acid to galactose containing acceptor substrates. This is Beta-galactoside alpha-2,6-sialyltransferase 2 (st6gal2) from Danio rerio (Zebrafish).